A 308-amino-acid chain; its full sequence is Ribosomal RNA large subunit methyltransferase F (308 aa).

This sequence belongs to the methyltransferase superfamily. METTL16/RlmF family.

The protein localises to the cytoplasm. The enzyme catalyses adenosine(1618) in 23S rRNA + S-adenosyl-L-methionine = N(6)-methyladenosine(1618) in 23S rRNA + S-adenosyl-L-homocysteine + H(+). Its function is as follows. Specifically methylates the adenine in position 1618 of 23S rRNA. This chain is Ribosomal RNA large subunit methyltransferase F, found in Salmonella agona (strain SL483).